A 157-amino-acid polypeptide reads, in one-letter code: Crossover junction endodeoxyribonuclease RuvC (157 aa).

Residues Asp-7, Glu-67, and Asp-140 contribute to the active site. The Mg(2+) site is built by Asp-7, Glu-67, and Asp-140.

Belongs to the RuvC family. As to quaternary structure, homodimer which binds Holliday junction (HJ) DNA. The HJ becomes 2-fold symmetrical on binding to RuvC with unstacked arms; it has a different conformation from HJ DNA in complex with RuvA. In the full resolvosome a probable DNA-RuvA(4)-RuvB(12)-RuvC(2) complex forms which resolves the HJ. The cofactor is Mg(2+).

It is found in the cytoplasm. It catalyses the reaction Endonucleolytic cleavage at a junction such as a reciprocal single-stranded crossover between two homologous DNA duplexes (Holliday junction).. In terms of biological role, the RuvA-RuvB-RuvC complex processes Holliday junction (HJ) DNA during genetic recombination and DNA repair. Endonuclease that resolves HJ intermediates. Cleaves cruciform DNA by making single-stranded nicks across the HJ at symmetrical positions within the homologous arms, yielding a 5'-phosphate and a 3'-hydroxyl group; requires a central core of homology in the junction. The consensus cleavage sequence is 5'-(A/T)TT(C/G)-3'. Cleavage occurs on the 3'-side of the TT dinucleotide at the point of strand exchange. HJ branch migration catalyzed by RuvA-RuvB allows RuvC to scan DNA until it finds its consensus sequence, where it cleaves and resolves the cruciform DNA. In Rickettsia conorii (strain ATCC VR-613 / Malish 7), this protein is Crossover junction endodeoxyribonuclease RuvC.